We begin with the raw amino-acid sequence, 775 residues long: Transcription activator of gluconeogenesis HCBG_00867 (775 aa).

The interval 1-70 (MTASTQNGSP…NAKDPLRPRR (70 aa)) is disordered. 2 stretches are compositionally biased toward polar residues: residues 21–41 (NQES…QSPA) and 48–60 (TAES…STAA). Positions 77-105 (CFACQRAHLTCGDERPCQRCIKRGLQDAC) form a DNA-binding region, zn(2)-C6 fungal-type. Disordered regions lie at residues 179–248 (TQAK…PFGA), 286–351 (GAGD…NIYN), 556–592 (NLNV…AGGG), and 649–725 (QGKE…SPKQ). Over residues 195–217 (MQDTSINPSAFQAPSPTSTPNFD) the composition is skewed to polar residues. A compositionally biased stretch (low complexity) spans 218–229 (LSSNPPNRNLSS). Polar residues-rich tracts occupy residues 230–244 (AMTQ…QTQD), 292–323 (PSDS…TQSP), 334–351 (WNPS…NIYN), and 557–576 (LNVN…TPRN). The segment covering 657-668 (GSDGKGGGGGGD) has biased composition (gly residues). Over residues 669-713 (VAATAATTSTSTSNGANSSGHANANRNNTNPKNSSPPSSSSAAAA) the composition is skewed to low complexity.

The protein belongs to the ERT1/acuK family.

Its subcellular location is the nucleus. In terms of biological role, transcription factor which regulates nonfermentable carbon utilization. Activator of gluconeogenetic genes. The chain is Transcription activator of gluconeogenesis HCBG_00867 from Ajellomyces capsulatus (strain G186AR / H82 / ATCC MYA-2454 / RMSCC 2432) (Darling's disease fungus).